The following is a 259-amino-acid chain: Emerin (259 aa).

N-acetylmethionine is present on methionine 1. In terms of domain architecture, LEM spans 1-45 (MDDYAVLSDTELAAVLRQYNIPHGPIVGSTRKLYEKKIFEYETQR). Serine 8, serine 29, serine 54, serine 72, serine 88, serine 99, serine 141, and serine 142 each carry phosphoserine. The interaction with F-actin stretch occupies residues 46–223 (RRLLPPNSSS…PAAALGQDRQ (178 aa)). A Phosphotyrosine modification is found at tyrosine 161. An interaction with CTNNB1 region spans residues 168–187 (RPISNVSRSSLGLSYYPTSS). A phosphoserine mark is found at serine 171, serine 174, and serine 176. The helical transmembrane segment at 224 to 244 (VPLWGQLLLFLVFAAFLLFVY) threads the bilayer.

Interacts with lamins A and C, BANF1, GMCL, BCLAF1 and YTHDC1/YT521. Interacts with TMEM43; the interaction retains emerin in the inner nuclear membrane. Interacts with ACTB, SPTAN1, F-actin, CTNNB1 and beta-tubulin. Interacts with SUN1 and SUN2. Interacts with TMEM201. Interacts with NEMP1. In terms of tissue distribution, in the ovary, highest expression is seen in primordial follicle oocytes (at protein level). Detected in embryonic fibroblasts, skeletal muscle, heart muscle and tongue epithelium (at protein level). Widely expressed.

It localises to the nucleus inner membrane. The protein resides in the nucleus outer membrane. Functionally, stabilizes and promotes the formation of a nuclear actin cortical network. Stimulates actin polymerization in vitro by binding and stabilizing the pointed end of growing filaments. Inhibits beta-catenin activity by preventing its accumulation in the nucleus. Acts by influencing the nuclear accumulation of beta-catenin through a CRM1-dependent export pathway. Links centrosomes to the nuclear envelope via a microtubule association. Required for proper localization of non-farnesylated prelamin-A/C. Together with NEMP1, contributes to nuclear envelope stiffness in germ cells. The protein is Emerin (Emd) of Mus musculus (Mouse).